A 421-amino-acid polypeptide reads, in one-letter code: Cell division protein FtsA (421 aa).

The protein belongs to the FtsA/MreB family. As to quaternary structure, self-interacts. Interacts with FtsZ.

It localises to the cell membrane. In terms of biological role, cell division protein that is involved in the assembly of the Z ring. May serve as a membrane anchor for the Z ring. The sequence is that of Cell division protein FtsA from Buchnera aphidicola subsp. Baizongia pistaciae (strain Bp).